A 432-amino-acid chain; its full sequence is Gamma-glutamyl phosphate reductase (432 aa).

Belongs to the gamma-glutamyl phosphate reductase family.

The protein localises to the cytoplasm. The enzyme catalyses L-glutamate 5-semialdehyde + phosphate + NADP(+) = L-glutamyl 5-phosphate + NADPH + H(+). It participates in amino-acid biosynthesis; L-proline biosynthesis; L-glutamate 5-semialdehyde from L-glutamate: step 2/2. In terms of biological role, catalyzes the NADPH-dependent reduction of L-glutamate 5-phosphate into L-glutamate 5-semialdehyde and phosphate. The product spontaneously undergoes cyclization to form 1-pyrroline-5-carboxylate. The chain is Gamma-glutamyl phosphate reductase from Corynebacterium glutamicum (strain R).